Consider the following 59-residue polypeptide: Large ribosomal subunit protein uL30 (59 aa).

The protein belongs to the universal ribosomal protein uL30 family. Part of the 50S ribosomal subunit.

The sequence is that of Large ribosomal subunit protein uL30 from Staphylococcus haemolyticus (strain JCSC1435).